Reading from the N-terminus, the 461-residue chain is Fumarate hydratase class II (461 aa).

Substrate is bound by residues 99–101, Arg127, 130–133, 140–142, and Thr188; these read SGT, HPND, and SSN. His189 functions as the Proton donor/acceptor in the catalytic mechanism. Ser319 is a catalytic residue. Substrate-binding positions include Ser320 and 325 to 327; that span reads KVN.

The protein belongs to the class-II fumarase/aspartase family. Fumarase subfamily. In terms of assembly, homotetramer.

The protein resides in the cytoplasm. It carries out the reaction (S)-malate = fumarate + H2O. Its pathway is carbohydrate metabolism; tricarboxylic acid cycle; (S)-malate from fumarate: step 1/1. Its function is as follows. Involved in the TCA cycle. Catalyzes the stereospecific interconversion of fumarate to L-malate. This Chromobacterium violaceum (strain ATCC 12472 / DSM 30191 / JCM 1249 / CCUG 213 / NBRC 12614 / NCIMB 9131 / NCTC 9757 / MK) protein is Fumarate hydratase class II.